Consider the following 282-residue polypeptide: Fused uL13/uS9 ribosomal subunit protein (282 aa).

The segment at 1–141 is large ribosomal subunit protein uL13; the sequence is MLLMIINGEG…LGEISELLGA (141 aa). Positions 150–282 are small ribosomal subunit protein uS9; it reads MKKVIHTSGK…ARARRQKSYR (133 aa). Residues 259–282 form a disordered region; sequence DPRRSEPKKYGGRGARARRQKSYR. Residues 273-282 are compositionally biased toward basic residues; that stretch reads ARARRQKSYR.

In the N-terminal section; belongs to the universal ribosomal protein uL13 family. This sequence in the C-terminal section; belongs to the universal ribosomal protein uS9 family. In terms of assembly, L13 is part of the 50S ribosomal subunit. S9 is part of the 30S ribosomal subunit.

Its function is as follows. L13 protein is one of the early assembly proteins of the 50S ribosomal subunit, although it is not seen to bind rRNA by itself. It is important during the early stages of 50S assembly. The protein is Fused uL13/uS9 ribosomal subunit protein (rpl13/rps9) of Methanothermobacter thermautotrophicus (strain ATCC 29096 / DSM 1053 / JCM 10044 / NBRC 100330 / Delta H) (Methanobacterium thermoautotrophicum).